A 2042-amino-acid polypeptide reads, in one-letter code: Protein mini spindles (2042 aa).

2 TOG regions span residues 1 to 229 and 267 to 505; these read MAED…VEPS and MDLL…KVAG. Residues 1-505 form a binds tubulin region; the sequence is MAEDTEYKKL…KAEIKIKVAG (505 aa). 2 promotes microtubule polymerization regions span residues 1 to 516 and 581 to 1080; these read MAED…ASAP and TPEE…EKAR. HEAT repeat units lie at residues 120 to 157, 160 to 197, 270 to 311, 315 to 353, 357 to 394, 396 to 433, and 440 to 478; these read EKQE…EFGH, IGVK…WIGA, LDPV…DHPK, GEYG…GLAK, NYAS…STSL, AQQE…TALN, and LTTS…VTPL. Residues 498–821 form an association with microtubule lattice region; the sequence is EIKIKVAGPK…PKPVRGVQRS (324 aa). The disordered stretch occupies residues 506–572; it reads PKKETRPASA…PTAALKAGGK (67 aa). A compositionally biased stretch (low complexity) spans 513–531; the sequence is ASAPTAKAAAPAKTVAGSV. Residues 581 to 814 are TOG 3; the sequence is TPEELQEKSE…KNVGEKPPKP (234 aa). 4 HEAT repeats span residues 587-624, 625-662, 672-710, and 745-782; these read EKSE…SGFD, AKQA…IIRS, TTVD…LEYV, and LQPK…YMGK. The disordered stretch occupies residues 804-849; the sequence is DKNVGEKPPKPVRGVQRSSGGTAGNSPDNEDDDGGAAGEEEPINMA. The span at 819–830 shows a compositional bias: polar residues; that stretch reads QRSSGGTAGNSP. Over residues 831–845 the composition is skewed to acidic residues; sequence DNEDDDGGAAGEEEP. TOG stretches follow at residues 849 to 1087 and 1179 to 1415; these read ADLL…PVKP and TELL…KPTP. HEAT repeat units follow at residues 856-893, 896-933, 937-974, and 1017-1054; these read DIAP…EARL, PSIG…AMGA, NHVR…KGGY, and EDIH…HLGF. A disordered region spans residues 1083–1140; the sequence is LPVKPLPKGKHQAPIPEEPKLKTVRGGGAGGAPGIQKSATARVAGGQDKQVPARKKDE. The segment at 1099–1428 is association with microtubule lattice; that stretch reads EEPKLKTVRG…VDVPAPQRHD (330 aa). HEAT repeat units lie at residues 1205-1242, 1272-1309, 1311-1344, and 1346-1383; these read RYHL…RFYD, NEGS…VFPF, KVFG…SYGM, and ICPQ…LSGE. 2 disordered regions span residues 1407-1455 and 1940-1959; these read AKKT…TFDQ and NAGS…NGPD. Residues 1940-1957 show a composition bias toward polar residues; that stretch reads NAGSTQDNRTDVNYQNNG.

Belongs to the TOG/XMAP215 family. Interacts with tacc, dgt6. Interacts with mv. Interacts with Patronin.

The protein localises to the cytoplasm. It localises to the cytoskeleton. It is found in the microtubule organizing center. Its subcellular location is the centrosome. The protein resides in the spindle. The protein localises to the perinuclear region. Its function is as follows. Binds to the plus end of microtubules and regulates microtubule dynamics and microtubule organization. Function in neurons is essential for adult survival, and is important for climbing behavior and activity. Promotes cytoplasmic microtubule nucleation and elongation. May act as a microtubule antipause factor that rapidly catalyzes the transition from pause to either growth or shrinkage. Involved in mitotic spindle elongation. Involved in the establishment of cell polarity and mitotic spindle orientation in neuroblasts. Required for maintaining the bipolarity of acentrosomal meiotic spindles; the function is dependent on tacc and involves ncd. Involved in oocyte microtubule cytoskeleton organization and bicoid mRNA localization. Seems to be involved in elongation of kinetochore-derived microtubule fibers. In fat body cells, essential component of perinuclear non-centrosomal microtubule-organizing centers (ncMTOCs) which function to accommodate the organization of microtubule (MT) networks to control nuclear positioning and dynein motor-based retrograde endosomal trafficking. Within the ncMTOCs, Msp300 and shot anchors the ncMTOC at the nuclear surface and recruits the MT minus-end regulators Patronin and Nin for assembly, anchoring and/or stabilization of circumferential and radial MTs at the ncMTOCs. Patronin, and perhaps Nin, then recruits msps to the ncMTOC where it is required for the gamma-tubulin-independent elongation and assembly of radial MTs. The protein is Protein mini spindles (msps) of Drosophila melanogaster (Fruit fly).